We begin with the raw amino-acid sequence, 276 residues long: Mitochondrial outer membrane protein porin of 34 kDa (276 aa).

Belongs to the eukaryotic mitochondrial porin (TC 1.B.8.1) family.

It is found in the mitochondrion outer membrane. Functionally, forms a channel through the cell membrane that allows diffusion of small hydrophilic molecules. The channel adopts an open conformation at low or zero membrane potential and a closed conformation at potentials above 30-40 mV. The open state has a weak anion selectivity whereas the closed state is cation-selective. The polypeptide is Mitochondrial outer membrane protein porin of 34 kDa (Solanum tuberosum (Potato)).